Consider the following 381-residue polypeptide: Queuine tRNA-ribosyltransferase (381 aa).

The Proton acceptor role is filled by Asp-89. Residues 89-93, Asp-143, Gln-187, and Gly-214 contribute to the substrate site; that span reads DSGGF. The RNA binding stretch occupies residues 245–251; sequence GVGKPED. The active-site Nucleophile is Asp-264. Residues 269 to 273 form an RNA binding; important for wobble base 34 recognition region; the sequence is TRNAR. Residues Cys-302, Cys-304, Cys-307, and His-333 each contribute to the Zn(2+) site.

The protein belongs to the queuine tRNA-ribosyltransferase family. Homodimer. Within each dimer, one monomer is responsible for RNA recognition and catalysis, while the other monomer binds to the replacement base PreQ1. It depends on Zn(2+) as a cofactor.

It catalyses the reaction 7-aminomethyl-7-carbaguanine + guanosine(34) in tRNA = 7-aminomethyl-7-carbaguanosine(34) in tRNA + guanine. It functions in the pathway tRNA modification; tRNA-queuosine biosynthesis. Functionally, catalyzes the base-exchange of a guanine (G) residue with the queuine precursor 7-aminomethyl-7-deazaguanine (PreQ1) at position 34 (anticodon wobble position) in tRNAs with GU(N) anticodons (tRNA-Asp, -Asn, -His and -Tyr). Catalysis occurs through a double-displacement mechanism. The nucleophile active site attacks the C1' of nucleotide 34 to detach the guanine base from the RNA, forming a covalent enzyme-RNA intermediate. The proton acceptor active site deprotonates the incoming PreQ1, allowing a nucleophilic attack on the C1' of the ribose to form the product. After dissociation, two additional enzymatic reactions on the tRNA convert PreQ1 to queuine (Q), resulting in the hypermodified nucleoside queuosine (7-(((4,5-cis-dihydroxy-2-cyclopenten-1-yl)amino)methyl)-7-deazaguanosine). The polypeptide is Queuine tRNA-ribosyltransferase (Pectobacterium atrosepticum (strain SCRI 1043 / ATCC BAA-672) (Erwinia carotovora subsp. atroseptica)).